The following is a 292-amino-acid chain: Bifunctional protein FolD (292 aa).

Residues 171-173 (GAS), Ile196, and Ile237 contribute to the NADP(+) site.

It belongs to the tetrahydrofolate dehydrogenase/cyclohydrolase family. In terms of assembly, homodimer.

The enzyme catalyses (6R)-5,10-methylene-5,6,7,8-tetrahydrofolate + NADP(+) = (6R)-5,10-methenyltetrahydrofolate + NADPH. It catalyses the reaction (6R)-5,10-methenyltetrahydrofolate + H2O = (6R)-10-formyltetrahydrofolate + H(+). Its pathway is one-carbon metabolism; tetrahydrofolate interconversion. Its function is as follows. Catalyzes the oxidation of 5,10-methylenetetrahydrofolate to 5,10-methenyltetrahydrofolate and then the hydrolysis of 5,10-methenyltetrahydrofolate to 10-formyltetrahydrofolate. The protein is Bifunctional protein FolD of Helicobacter acinonychis (strain Sheeba).